The sequence spans 481 residues: Zinc finger CCCH domain-containing protein 4 (481 aa).

The C3H1-type zinc-finger motif lies at 157–184 (RNRAHVCSFFIRGECTRGAECPYRHEMP). The region spanning 228-301 (KTLYVGGLNS…QRLKLTWGRP (74 aa)) is the RRM domain. Residues 329–481 (HNQPPPMQQY…DVSTATGSSQ (153 aa)) are disordered. Pro residues predominate over residues 331–345 (QPPPMQQYYMHPPPA). 2 stretches are compositionally biased toward low complexity: residues 369-389 (AGGS…MPPH) and 399-410 (YMPSPYQQQYPP). The span at 423-444 (APPPAAYPYPQQPGPGSRPAPS) shows a compositional bias: pro residues. Residues 449–471 (SAISPDSAPAGSGAPSGSSQQAP) show a composition bias toward low complexity. Residues 472 to 481 (DVSTATGSSQ) are compositionally biased toward polar residues.

The polypeptide is Zinc finger CCCH domain-containing protein 4 (Arabidopsis thaliana (Mouse-ear cress)).